We begin with the raw amino-acid sequence, 406 residues long: 3-phosphoshikimate 1-carboxyvinyltransferase (406 aa).

Residues lysine 20, serine 21, and arginine 25 each contribute to the 3-phosphoshikimate site. Lysine 20 lines the phosphoenolpyruvate pocket. Phosphoenolpyruvate contacts are provided by glycine 84 and arginine 112. 3-phosphoshikimate is bound by residues serine 155, serine 156, glutamine 157, aspartate 295, glutamine 317, and lysine 321. Residue glutamine 157 coordinates phosphoenolpyruvate. Aspartate 295 acts as the Proton acceptor in catalysis. Positions 325, 366, and 392 each coordinate phosphoenolpyruvate.

The protein belongs to the EPSP synthase family. In terms of assembly, monomer.

It localises to the cytoplasm. The enzyme catalyses 3-phosphoshikimate + phosphoenolpyruvate = 5-O-(1-carboxyvinyl)-3-phosphoshikimate + phosphate. The protein operates within metabolic intermediate biosynthesis; chorismate biosynthesis. Catalyzes the transfer of the enolpyruvyl moiety of phosphoenolpyruvate (PEP) to the 5-hydroxyl of shikimate-3-phosphate (S3P) to produce enolpyruvyl shikimate-3-phosphate and inorganic phosphate. The sequence is that of 3-phosphoshikimate 1-carboxyvinyltransferase from Pyrococcus furiosus (strain ATCC 43587 / DSM 3638 / JCM 8422 / Vc1).